A 900-amino-acid polypeptide reads, in one-letter code: Probable beta-mannosidase (900 aa).

Positions 1–21 (MRTSLVVCLFWLLFQLHTTHG) are cleaved as a signal peptide. N-linked (GlcNAc...) asparagine glycans are attached at residues Asn-38, Asn-42, and Asn-131. Residue Glu-463 is the Proton donor of the active site. 4 N-linked (GlcNAc...) asparagine glycosylation sites follow: Asn-477, Asn-576, Asn-661, and Asn-738.

The protein belongs to the glycosyl hydrolase 2 family.

It is found in the lysosome. It carries out the reaction Hydrolysis of terminal, non-reducing beta-D-mannose residues in beta-D-mannosides.. This is Probable beta-mannosidase from Caenorhabditis elegans.